Here is a 346-residue protein sequence, read N- to C-terminus: NADH-quinone oxidoreductase subunit H (346 aa).

8 helical membrane-spanning segments follow: residues 6-26 (ILFWLLKSGLFFFILITACAY), 76-96 (VMYLIAPAISMTCAIMAWSVV), 128-148 (ILFLFAISSLAVYGIIIAGWA), 166-186 (ISYELPLGMSVVSIVILSGSL), 198-218 (LWNIFKLPGFIAFCLFVVAMF), 260-280 (ITMSCVVTLLFFGGYQVPFGI), 289-309 (LFGLVFFLGKVLFFTFLFLWV), and 324-344 (LGWKKLIPWAILNILIASIYI).

It belongs to the complex I subunit 1 family. In terms of assembly, NDH-1 is composed of 14 different subunits. Subunits NuoA, H, J, K, L, M, N constitute the membrane sector of the complex.

It is found in the cell inner membrane. The enzyme catalyses a quinone + NADH + 5 H(+)(in) = a quinol + NAD(+) + 4 H(+)(out). Functionally, NDH-1 shuttles electrons from NADH, via FMN and iron-sulfur (Fe-S) centers, to quinones in the respiratory chain. The immediate electron acceptor for the enzyme in this species is believed to be ubiquinone. Couples the redox reaction to proton translocation (for every two electrons transferred, four hydrogen ions are translocated across the cytoplasmic membrane), and thus conserves the redox energy in a proton gradient. This subunit may bind ubiquinone. This is NADH-quinone oxidoreductase subunit H from Leptospira interrogans serogroup Icterohaemorrhagiae serovar copenhageni (strain Fiocruz L1-130).